Here is a 285-residue protein sequence, read N- to C-terminus: Probable endonuclease 4 (285 aa).

Positions 69, 109, 145, 179, 182, 216, 229, 231, and 261 each coordinate Zn(2+).

This sequence belongs to the AP endonuclease 2 family. It depends on Zn(2+) as a cofactor.

The enzyme catalyses Endonucleolytic cleavage to 5'-phosphooligonucleotide end-products.. Functionally, endonuclease IV plays a role in DNA repair. It cleaves phosphodiester bonds at apurinic or apyrimidinic (AP) sites, generating a 3'-hydroxyl group and a 5'-terminal sugar phosphate. The chain is Probable endonuclease 4 from Shigella flexneri serotype 5b (strain 8401).